The following is a 712-amino-acid chain: Osmolarity two-component system protein SSK1 (712 aa).

Positions 73–114 (ADNTSSNNTNDNSCRSKSNGAGSGANLSVNSNTKSSVSPTAG) are disordered. Positions 74 to 85 (DNTSSNNTNDNS) are enriched in low complexity. A compositionally biased stretch (polar residues) spans 87 to 113 (RSKSNGAGSGANLSVNSNTKSSVSPTA). S110, S195, S327, S351, S368, and S380 each carry phosphoserine. The interval 340–362 (KADLKGKDGNSSPQEFKLITDEE) is disordered. The tract at residues 448 to 468 (EVQRRKEDVTPASPILTSSQT) is disordered. The Response regulatory domain maps to 505–647 (NVLIVEDNVI…WLSKKITEWG (143 aa)). Position 554 is a 4-aspartylphosphate (D554). A disordered region spans residues 672 to 712 (KSPQKPIAPSNPHSFKQATSMTPTHSPVRKNSNLSPTQIEL). Residue S673 is modified to Phosphoserine. Polar residues predominate over residues 682–712 (NPHSFKQATSMTPTHSPVRKNSNLSPTQIEL). The residue at position 693 (T693) is a Phosphothreonine. A phosphoserine mark is found at S703 and S706.

Belongs to the SSK1 family. Interacts with SSK2, SSK22 and YPD1. In terms of processing, the phosphorelay mechanism involves the sequential transfer of a phosphate group from 'His-576' (H1) to 'Asp-1144' (D1) of SLN1, then to 'His-64' (H2) of YPD1 and finally to Asp-554 (D2) of SSK1.

The protein localises to the cytoplasm. Functionally, final receptor of the SLN1-YPD1-SSK1 two-component regulatory system, which controls activity of the HOG1 pathway in response to changes in the osmolarity of the extracellular environment. Under normal osmotic conditions, maintained in a phosphorylated and inactive state by the phosphorelay intermediate protein YPD1. Under conditions of high osmolarity, the histidine kinase SLN1 is no longer active and the unphosphorylated form of SSK1 interacts with and activates SSK2 and SSK22, two MAPKKKs that further stimulate the PBS2-HOG1 MAPKK-MAPK cascade. Unphosphorylated SSK1 is subsequently degraded by the UBC7-dependent ubiquitin-proteasome system to down-regulate the HOG1 pathway after completion of the osmotic adaptation. This Saccharomyces cerevisiae (strain ATCC 204508 / S288c) (Baker's yeast) protein is Osmolarity two-component system protein SSK1.